Here is a 414-residue protein sequence, read N- to C-terminus: Nucleoredoxin (414 aa).

The Thioredoxin domain maps to 131–305; sequence LLVKDDPEGL…ELNAVQLNEG (175 aa).

The protein belongs to the nucleoredoxin family.

It localises to the cytoplasm. It is found in the cytosol. The protein resides in the nucleus. The enzyme catalyses [protein]-dithiol + NAD(+) = [protein]-disulfide + NADH + H(+). It catalyses the reaction [protein]-dithiol + NADP(+) = [protein]-disulfide + NADPH + H(+). Functions as a redox-dependent negative regulator of the Wnt signaling pathway. The sequence is that of Nucleoredoxin (nxn) from Xenopus laevis (African clawed frog).